Consider the following 715-residue polypeptide: MANASLNGDQSKQQQQQQQQQQQQQNYYNPNAAQSFVPQGGYQQFQQFQPQQQQQQYGGYNQYNQYQGGYQQNYNNRGGYQQGYNNRGGYQQNYNNRGGYQGYNQNQQYGGYQQYNSQPQQQQQQQSQGMSLADFQKQKTEQQASLNKPAVKKTLKLAGSSGIKLANATKKVDTTSKPQSKESSPAPAPAASASASAPQEEKKEEKEAAAATPAAAPETKKETSAPAETKKEATPTPAAKNESTPIPAAAAKKESTPVSNSASVATADALVKEQEDEIDEEVVKDMFGGKDHVSIIFMGHVDAGKSTMGGNILYLTGSVDKRTVEKYEREAKDAGRQGWYLSWVMDTNKEERNDGKTIEVGKAYFETDKRRYTILDAPGHKMYVSEMIGGASQADVGILVISARKGEYETGFEKGGQTREHALLAKTQGVNKIIVVVNKMDDSTVGWSKERYQECTTKLGAFLKGIGYAKDDIIYMPVSGYTGAGLKDRVDPKDCPWYDGPSLLEYLDNMDTMNRKINGPFMMPVSGKMKDLGTIVEGKIESGHVKKGTNLIMMPNKTPIEVLTIFNETEQECDTAFSGEQVRLKIKGIEEEDLQPGYVLTSPKNPVKTVTRFEAQIAIVELKSILSNGFSCVMHLHTAIEEVKFIELKHKLEKGTNRKSKKPPAFAKKGMKIIAILEVGELVCAETYKDYPQLGRFTLRDQGTTIAIGKITKLL.

Residues methionine 1–lysine 12 show a composition bias toward polar residues. Disordered regions lie at residues methionine 1–lysine 148 and alanine 168–alanine 262. The segment at serine 5–glutamine 128 is several sort of repeats. Residues glutamine 13 to glutamine 25 are compositionally biased toward low complexity. Positions asparagine 26 to valine 37 are enriched in polar residues. Low complexity-rich tracts occupy residues glutamine 39–glycine 129 and serine 176–proline 198. Residues glycine 129–aspartate 285 are charged. 2 stretches are compositionally biased toward basic and acidic residues: residues glutamine 199–alanine 208 and glutamate 218–alanine 233. Positions lysine 290 to arginine 515 constitute a tr-type G domain. The G1 stretch occupies residues glycine 299–serine 306. Glycine 299–serine 306 is a GTP binding site. Positions glycine 355–glutamate 359 are G2. Threonine 373 carries the post-translational modification Phosphothreonine. A G3 region spans residues aspartate 376 to glycine 379. Residues aspartate 376–histidine 380 and asparagine 438–aspartate 441 contribute to the GTP site. The interval asparagine 438 to aspartate 441 is G4. The interval serine 479–tyrosine 481 is G5.

This sequence belongs to the TRAFAC class translation factor GTPase superfamily. Classic translation factor GTPase family. ERF3 subfamily.

It localises to the cytoplasm. Involved in translation termination. Stimulates the activity of ERF1. Binds guanine nucleotides. The polypeptide is Eukaryotic peptide chain release factor GTP-binding subunit (SUP35) (Candida albicans (Yeast)).